A 947-amino-acid chain; its full sequence is Translation initiation factor IF-2 (947 aa).

Positions 47-332 are disordered; that stretch reads LRESFGGGKS…RGRKSKRAKR (286 aa). Positions 86–95 are enriched in basic and acidic residues; sequence APDRSLDAAL. Over residues 105–123 the composition is skewed to pro residues; sequence APVPAPAPAPTPAPAPAPA. Residues 131–145 show a composition bias toward low complexity; it reads APPAATPAAPAASAA. Composition is skewed to pro residues over residues 146–171 and 210–225; these read PAPPKAPLPGQRPAPTPGKPAAPQAP and PRPQAPRPGAPRPGAP. Residues 255-318 show a composition bias toward gly residues; that stretch reads RPGGGRPGGP…GAAGAFGRPG (64 aa). Residues 322–331 are compositionally biased toward basic residues; sequence RRGRKSKRAK. The 172-residue stretch at 443 to 614 folds into the tr-type G domain; sequence TRPPVVTVMG…AVLLTADAAL (172 aa). A G1 region spans residues 452–459; sequence GHVDHGKT. 452-459 is a GTP binding site; that stretch reads GHVDHGKT. The G2 stretch occupies residues 477-481; that stretch reads GITQH. The tract at residues 502-505 is G3; sequence DTPG. GTP-binding positions include 502-506 and 556-559; these read DTPGH and NKID. Positions 556-559 are G4; the sequence is NKID. The interval 592 to 594 is G5; the sequence is SAK.

This sequence belongs to the TRAFAC class translation factor GTPase superfamily. Classic translation factor GTPase family. IF-2 subfamily.

It localises to the cytoplasm. In terms of biological role, one of the essential components for the initiation of protein synthesis. Protects formylmethionyl-tRNA from spontaneous hydrolysis and promotes its binding to the 30S ribosomal subunits. Also involved in the hydrolysis of GTP during the formation of the 70S ribosomal complex. This chain is Translation initiation factor IF-2, found in Mycobacterium marinum (strain ATCC BAA-535 / M).